The primary structure comprises 59 residues: Ribosome biogenesis protein Nop10 (59 aa).

It belongs to the NOP10 family.

In terms of biological role, involved in ribosome biogenesis; more specifically in 18S rRNA pseudouridylation and in cleavage of pre-rRNA. The protein is Ribosome biogenesis protein Nop10 of Thermococcus sibiricus (strain DSM 12597 / MM 739).